We begin with the raw amino-acid sequence, 497 residues long: Probable cytosol aminopeptidase (497 aa).

Positions 263 and 268 each coordinate Mn(2+). K275 is an active-site residue. Residues D286, D345, and E347 each coordinate Mn(2+). R349 is a catalytic residue.

This sequence belongs to the peptidase M17 family. It depends on Mn(2+) as a cofactor.

It is found in the cytoplasm. The catalysed reaction is Release of an N-terminal amino acid, Xaa-|-Yaa-, in which Xaa is preferably Leu, but may be other amino acids including Pro although not Arg or Lys, and Yaa may be Pro. Amino acid amides and methyl esters are also readily hydrolyzed, but rates on arylamides are exceedingly low.. It catalyses the reaction Release of an N-terminal amino acid, preferentially leucine, but not glutamic or aspartic acids.. Its function is as follows. Presumably involved in the processing and regular turnover of intracellular proteins. Catalyzes the removal of unsubstituted N-terminal amino acids from various peptides. The sequence is that of Probable cytosol aminopeptidase from Sinorhizobium fredii (strain NBRC 101917 / NGR234).